Here is a 183-residue protein sequence, read N- to C-terminus: MTEQTYCDRLVQDTPFLTSLGRLSEQQVDRIILQLNRYYPQILSNKDAEKFRNPKLSLRVRLCDLLGHLQRSGERDCQEFYRALYIHAQPLHSCLPSRHALQNSDCTELDSGNASCELSDRGPVAFLTCLGLAAGLALLIYCCPPDPKVLPGARRVLGFSPVIIDRHVSRFLLAFLTDDLGGL.

Cys7 and Cys77 are joined by a disulfide. The CARD domain maps to 8 to 99 (DRLVQDTPFL…PLHSCLPSRH (92 aa)). A helical membrane pass occupies residues 122-142 (GPVAFLTCLGLAAGLALLIYC).

Associates with BCL10 by CARD-CARD interaction.

The protein localises to the endoplasmic reticulum membrane. It is found in the mitochondrion membrane. Plays a role in inhibiting the effects of BCL10-induced activation of NF-kappa-B. May inhibit the phosphorylation of BCL10 in a CARD-dependent manner. This Bos taurus (Bovine) protein is Caspase recruitment domain-containing protein 19 (CARD19).